Here is a 592-residue protein sequence, read N- to C-terminus: Aspartate--tRNA ligase (592 aa).

Glu-171 provides a ligand contact to L-aspartate. Residues 195 to 198 (QLFK) are aspartate. Arg-217 contacts L-aspartate. ATP contacts are provided by residues 217–219 (RDE) and Gln-226. L-aspartate is bound at residue His-448. ATP is bound at residue Glu-482. Arg-489 provides a ligand contact to L-aspartate. 534 to 537 (GLDR) lines the ATP pocket.

Belongs to the class-II aminoacyl-tRNA synthetase family. Type 1 subfamily. In terms of assembly, homodimer.

The protein localises to the cytoplasm. The enzyme catalyses tRNA(Asp) + L-aspartate + ATP = L-aspartyl-tRNA(Asp) + AMP + diphosphate. Catalyzes the attachment of L-aspartate to tRNA(Asp) in a two-step reaction: L-aspartate is first activated by ATP to form Asp-AMP and then transferred to the acceptor end of tRNA(Asp). This Vibrio atlanticus (strain LGP32) (Vibrio splendidus (strain Mel32)) protein is Aspartate--tRNA ligase.